The primary structure comprises 173 residues: Development-specific protein S (173 aa).

Beta/gamma crystallin 'Greek key' domains lie at 2–46 (ANIT…KVPP) and 48–86 (VKAI…RVIS). Ca(2+) is bound by residues Tyr8, Asn37, Thr38, Ser40, Gln54, Asn77, Asn78, and Ser80. The interval 87-90 (VPVQ) is connecting peptide. 2 Beta/gamma crystallin 'Greek key' domains span residues 91 to 135 (PRAR…KPQG) and 136 to 173 (LAVV…IRIS).

It belongs to the beta/gamma-crystallin family.

In terms of biological role, protein S, induced in large amounts during fruiting body formation, assembles on the surface of myxospores in the presence of calcium ions. The chain is Development-specific protein S (tps) from Myxococcus xanthus.